A 393-amino-acid chain; its full sequence is uncharacterized protein (393 aa).

Disordered regions lie at residues 77–118 and 259–296; these read DSNN…SIRP and INNNNNNNNNNSNNNNNNNNSNNNDNNNNINTKVDESN. Positions 79-92 are enriched in low complexity; it reads NNNNNNNNNNNNNN. Residues 103 to 114 are compositionally biased toward polar residues; that stretch reads IRQSLSSPQQLV. The span at 259–289 shows a compositional bias: low complexity; it reads INNNNNNNNNNSNNNNNNNNSNNNDNNNNIN.

This is an uncharacterized protein from Dictyostelium discoideum (Social amoeba).